The primary structure comprises 77 residues: RNA-binding protein Hfq (77 aa).

The region spanning 9 to 68 is the Sm domain; it reads DPFLNALRKEHIPVAIYLVNGIKLQGQIESFDQFVILLKNTVSQMVYKHAISTVVPARAI.

The protein belongs to the Hfq family. Homohexamer.

RNA chaperone that binds small regulatory RNA (sRNAs) and mRNAs to facilitate mRNA translational regulation in response to envelope stress, environmental stress and changes in metabolite concentrations. Also binds with high specificity to tRNAs. This Psychromonas ingrahamii (strain DSM 17664 / CCUG 51855 / 37) protein is RNA-binding protein Hfq.